The primary structure comprises 454 residues: Asparagine--tRNA ligase (454 aa).

Belongs to the class-II aminoacyl-tRNA synthetase family. In terms of assembly, homodimer.

Its subcellular location is the cytoplasm. The enzyme catalyses tRNA(Asn) + L-asparagine + ATP = L-asparaginyl-tRNA(Asn) + AMP + diphosphate + H(+). This chain is Asparagine--tRNA ligase, found in Mesoplasma florum (strain ATCC 33453 / NBRC 100688 / NCTC 11704 / L1) (Acholeplasma florum).